The sequence spans 179 residues: Translation initiation factor IF-3 (179 aa).

This sequence belongs to the IF-3 family. In terms of assembly, monomer.

Its subcellular location is the cytoplasm. IF-3 binds to the 30S ribosomal subunit and shifts the equilibrium between 70S ribosomes and their 50S and 30S subunits in favor of the free subunits, thus enhancing the availability of 30S subunits on which protein synthesis initiation begins. In Proteus hauseri, this protein is Translation initiation factor IF-3.